We begin with the raw amino-acid sequence, 132 residues long: Ribosome-binding factor A (132 aa).

It belongs to the RbfA family. Monomer. Binds 30S ribosomal subunits, but not 50S ribosomal subunits or 70S ribosomes.

Its subcellular location is the cytoplasm. Its function is as follows. One of several proteins that assist in the late maturation steps of the functional core of the 30S ribosomal subunit. Associates with free 30S ribosomal subunits (but not with 30S subunits that are part of 70S ribosomes or polysomes). Required for efficient processing of 16S rRNA. May interact with the 5'-terminal helix region of 16S rRNA. In Pseudomonas entomophila (strain L48), this protein is Ribosome-binding factor A.